The sequence spans 219 residues: MFDANCLKLMFVAGSQDFYHIKGGKNDRINALLDTLELALQSQITAFQFRQKGDLALQDPVEIKQLALKCQKLCQKYGTPFIINDEVRLALELKADGVHVGQEDMAIEEVIALCKKHQFIGLSVNTLEQALKARHLDAVAYFGVGPIFPTPSKKDKQVVGVELLKKIRDSGVKKPLIAIGGITTHNASKLREYGGIAVISAITQARDKALAIEKLLNNA.

4-amino-2-methyl-5-(diphosphooxymethyl)pyrimidine is bound by residues 48–52 and asparagine 84; that span reads QFRQK. 2 residues coordinate Mg(2+): aspartate 85 and aspartate 104. Serine 123 contacts 4-amino-2-methyl-5-(diphosphooxymethyl)pyrimidine. Residue 150–152 participates in 2-[(2R,5Z)-2-carboxy-4-methylthiazol-5(2H)-ylidene]ethyl phosphate binding; it reads TPS. Position 153 (lysine 153) interacts with 4-amino-2-methyl-5-(diphosphooxymethyl)pyrimidine. 2-[(2R,5Z)-2-carboxy-4-methylthiazol-5(2H)-ylidene]ethyl phosphate is bound by residues glycine 181 and 199–200; that span reads IS.

The protein belongs to the thiamine-phosphate synthase family. The cofactor is Mg(2+).

The enzyme catalyses 2-[(2R,5Z)-2-carboxy-4-methylthiazol-5(2H)-ylidene]ethyl phosphate + 4-amino-2-methyl-5-(diphosphooxymethyl)pyrimidine + 2 H(+) = thiamine phosphate + CO2 + diphosphate. It catalyses the reaction 2-(2-carboxy-4-methylthiazol-5-yl)ethyl phosphate + 4-amino-2-methyl-5-(diphosphooxymethyl)pyrimidine + 2 H(+) = thiamine phosphate + CO2 + diphosphate. It carries out the reaction 4-methyl-5-(2-phosphooxyethyl)-thiazole + 4-amino-2-methyl-5-(diphosphooxymethyl)pyrimidine + H(+) = thiamine phosphate + diphosphate. It functions in the pathway cofactor biosynthesis; thiamine diphosphate biosynthesis; thiamine phosphate from 4-amino-2-methyl-5-diphosphomethylpyrimidine and 4-methyl-5-(2-phosphoethyl)-thiazole: step 1/1. Condenses 4-methyl-5-(beta-hydroxyethyl)thiazole monophosphate (THZ-P) and 2-methyl-4-amino-5-hydroxymethyl pyrimidine pyrophosphate (HMP-PP) to form thiamine monophosphate (TMP). The sequence is that of Thiamine-phosphate synthase from Helicobacter pylori (strain HPAG1).